The following is a 487-amino-acid chain: Histamine H1 receptor (487 aa).

Over 1–29 (MSLPNSSCLLEDKMCEGNKTTMASPQLMP) the chain is Extracellular. Residues Asn5 and Asn18 are each glycosylated (N-linked (GlcNAc...) asparagine). Residues 30–50 (LVVVLSTICLVTVGLNLLVLY) traverse the membrane as a helical segment. Residues 51–64 (AVRSERKLHTVGNL) lie on the Cytoplasmic side of the membrane. A helical membrane pass occupies residues 65–89 (YIVSLSVADLIVGAVVMPMNILYLL). The Extracellular portion of the chain corresponds to 90 to 97 (MSKWSLGR). A helical membrane pass occupies residues 98 to 123 (PLCLFWLSMDYVASTASIFSVFILCI). An intrachain disulfide couples Cys100 to Cys180. Histamine is bound by residues Asp107 and Thr112. Residues 107 to 112 (DYVAST) are important for agonist binding. Residues 124 to 144 (DRYRSVQQPLRYLKYRTKTRA) lie on the Cytoplasmic side of the membrane. Phosphothreonine occurs at positions 140 and 142. A helical membrane pass occupies residues 145-164 (SATILGAWFLSFLWVIPILG). Residues 165–188 (WNHFMQQTSVRREDKCETDFYDVT) lie on the Extracellular side of the membrane. A helical transmembrane segment spans residues 189 to 211 (WFKVMTAIINFYLPTLLMLWFYA). Asn198 provides a ligand contact to histamine. Residues 212–416 (KIYKAVRQHC…MNRERKAAKQ (205 aa)) are Cytoplasmic-facing. Ser230 carries the phosphoserine modification. Basic and acidic residues predominate over residues 238–261 (KLRPENPKGDAKKPGKESPWEVLK). Residues 238 to 291 (KLRPENPKGDAKKPGKESPWEVLKRKPKDAGGGSVLKSPSQTPKEMKSPVVFSQ) form a disordered region. Thr279 carries the post-translational modification Phosphothreonine. Phosphoserine is present on residues Ser344 and Ser347. Positions 345–379 (EISEDQMLGDSQSFSRTDSDTTTETAPGKGKLRSG) are disordered. Polar residues predominate over residues 353–369 (GDSQSFSRTDSDTTTET). A phosphoserine mark is found at Ser380, Ser396, and Ser398. Residues 417-440 (LGFIMAAFILCWIPYFIFFMVIAF) traverse the membrane as a helical segment. Residues 424 to 428 (FILCW) are important for agonist binding. Position 431 (Tyr431) interacts with histamine. A disulfide bond links Cys441 and Cys444. Residues 441 to 446 (CKNCCN) are Extracellular-facing. A helical transmembrane segment spans residues 447–469 (EHLHMFTIWLGYINSTLNPLIYP). The Cytoplasmic portion of the chain corresponds to 470 to 487 (LCNENFKKTFKRILHIRS).

The protein belongs to the G-protein coupled receptor 1 family. Phosphorylation at sites in the second and third cytoplasmic loops independently contribute to agonist-induced receptor down-regulation.

Its subcellular location is the cell membrane. Functionally, G-protein-coupled receptor for histamine, a biogenic amine that functions as an immune modulator and a neurotransmitter. Through the H1 receptor, histamine mediates the contraction of smooth muscles and increases capillary permeability due to contraction of terminal venules. Also mediates neurotransmission in the central nervous system and thereby regulates circadian rhythms, emotional and locomotor activities as well as cognitive functions. This chain is Histamine H1 receptor, found in Homo sapiens (Human).